Reading from the N-terminus, the 450-residue chain is MRKLFGTDGIRGVANVHPMTMEIAMQVGRAIAFLVKKENYRHRIVIGKDTRLSGYMIENAIVAGICSMGVDVLLVGPLPTPGIAFITTSMRADAGVVISASHNPFQDNGIKIFFSDGFKLPDAMELKIEDLVLSQRMLALQPLAEEVGRASRIDDAKGRYIVFLKNTFPKKYTLDGFHIVIDCAHGATYGVAPHVFEELGAKVTALGIEPNGQNINAGCGALHPELMAGKVKELGADIGLAFDGDGDRLIVCDEHGVVVDGDHVMAICAKELLAQRKSKKKTLVATVMSNMGLEVAMKKMGGHLVRADVGDRYVVECMRKNGYSFGGEQSGHLVFLEHMTTGDGILAALQILAIMKKRKKTLSELAQVMQSFPQVLKNVRTAKKISVDSIVGFADAVKKYEMQLGDTGRILVRPSGTEPVIRVMVEGLDSAEINDIADELCELIRRVSNS.

Serine 101 serves as the catalytic Phosphoserine intermediate. Mg(2+)-binding residues include serine 101, aspartate 243, aspartate 245, and aspartate 247. Serine 101 is subject to Phosphoserine.

Belongs to the phosphohexose mutase family. Requires Mg(2+) as cofactor. Activated by phosphorylation.

It carries out the reaction alpha-D-glucosamine 1-phosphate = D-glucosamine 6-phosphate. Functionally, catalyzes the conversion of glucosamine-6-phosphate to glucosamine-1-phosphate. The polypeptide is Phosphoglucosamine mutase (Desulfotalea psychrophila (strain LSv54 / DSM 12343)).